The primary structure comprises 943 residues: Isoleucine--tRNA ligase (943 aa).

The short motif at 59–69 is the 'HIGH' region element; the sequence is PYANGQIHLGH. Glu577 contacts L-isoleucyl-5'-AMP. A 'KMSKS' region motif is present at residues 618-622; it reads KMSKS. Lys621 contributes to the ATP binding site. Zn(2+) is bound by residues Cys906, Cys909, Cys926, and Cys929.

It belongs to the class-I aminoacyl-tRNA synthetase family. IleS type 1 subfamily. In terms of assembly, monomer. Zn(2+) serves as cofactor.

The protein resides in the cytoplasm. The catalysed reaction is tRNA(Ile) + L-isoleucine + ATP = L-isoleucyl-tRNA(Ile) + AMP + diphosphate. Catalyzes the attachment of isoleucine to tRNA(Ile). As IleRS can inadvertently accommodate and process structurally similar amino acids such as valine, to avoid such errors it has two additional distinct tRNA(Ile)-dependent editing activities. One activity is designated as 'pretransfer' editing and involves the hydrolysis of activated Val-AMP. The other activity is designated 'posttransfer' editing and involves deacylation of mischarged Val-tRNA(Ile). This chain is Isoleucine--tRNA ligase, found in Xanthomonas campestris pv. campestris (strain B100).